The sequence spans 235 residues: Ribonuclease 3 (235 aa).

One can recognise an RNase III domain in the interval Ile-6–Gly-131. Glu-44 contacts Mg(2+). Asp-48 is an active-site residue. Mg(2+)-binding residues include Asp-117 and Glu-120. Residue Glu-120 is part of the active site. One can recognise a DRBM domain in the interval Asp-156–Ile-225.

The protein belongs to the ribonuclease III family. Homodimer. The cofactor is Mg(2+).

It localises to the cytoplasm. The catalysed reaction is Endonucleolytic cleavage to 5'-phosphomonoester.. Functionally, digests double-stranded RNA. Involved in the processing of primary rRNA transcript to yield the immediate precursors to the large and small rRNAs (23S and 16S). Processes some mRNAs, and tRNAs when they are encoded in the rRNA operon. Processes pre-crRNA and tracrRNA of type II CRISPR loci if present in the organism. The sequence is that of Ribonuclease 3 from Bartonella quintana (strain Toulouse) (Rochalimaea quintana).